The following is a 708-amino-acid chain: tRNA 5-methylaminomethyl-2-thiouridine biosynthesis bifunctional protein MnmC (708 aa).

The tract at residues 1-278 (MTAEPNKPCQ…ERQVLRQQDA (278 aa)) is tRNA (mnm(5)s(2)U34)-methyltransferase. Positions 301 to 708 (IGGGLASAHL…LRKLLKGKAL (408 aa)) are FAD-dependent cmnm(5)s(2)U34 oxidoreductase.

In the N-terminal section; belongs to the methyltransferase superfamily. tRNA (mnm(5)s(2)U34)-methyltransferase family. This sequence in the C-terminal section; belongs to the DAO family. The cofactor is FAD.

It localises to the cytoplasm. It carries out the reaction 5-aminomethyl-2-thiouridine(34) in tRNA + S-adenosyl-L-methionine = 5-methylaminomethyl-2-thiouridine(34) in tRNA + S-adenosyl-L-homocysteine + H(+). In terms of biological role, catalyzes the last two steps in the biosynthesis of 5-methylaminomethyl-2-thiouridine (mnm(5)s(2)U) at the wobble position (U34) in tRNA. Catalyzes the FAD-dependent demodification of cmnm(5)s(2)U34 to nm(5)s(2)U34, followed by the transfer of a methyl group from S-adenosyl-L-methionine to nm(5)s(2)U34, to form mnm(5)s(2)U34. In Shewanella baltica (strain OS195), this protein is tRNA 5-methylaminomethyl-2-thiouridine biosynthesis bifunctional protein MnmC.